A 156-amino-acid chain; its full sequence is Photosystem I reaction center subunit XI (156 aa).

2 helical membrane passes run 75–95 and 128–148; these read GGLL…SLYA and FFIG…ALYF.

It belongs to the PsaL family.

It localises to the cellular thylakoid membrane. The chain is Photosystem I reaction center subunit XI from Crocosphaera subtropica (strain ATCC 51142 / BH68) (Cyanothece sp. (strain ATCC 51142)).